Consider the following 433-residue polypeptide: uncharacterized protein (433 aa).

11 helical membrane passes run 28–48 (FAAL…SHII), 56–76 (IYGW…YPFF), 102–122 (IWIF…AVGL), 126–146 (AILT…FIVI), 164–184 (LSKL…IIAL), 207–227 (ALGF…ISAI), 250–270 (FNVG…LGAL), 304–324 (GLIA…VIDG), 345–365 (SYLN…IFYF), 375–395 (FAMI…LSLV), and 406–426 (LLWL…LFIA).

Its subcellular location is the cell membrane. This is an uncharacterized protein from Pasteurella multocida (strain Pm70).